The sequence spans 109 residues: Cell division protein ZapA (109 aa).

Residues 21 to 99 adopt a coiled-coil conformation; that stretch reads PDQRDALNQA…IEQALLEQGR (79 aa).

This sequence belongs to the ZapA family. Type 1 subfamily. Homodimer. Interacts with FtsZ.

The protein localises to the cytoplasm. In terms of biological role, activator of cell division through the inhibition of FtsZ GTPase activity, therefore promoting FtsZ assembly into bundles of protofilaments necessary for the formation of the division Z ring. It is recruited early at mid-cell but it is not essential for cell division. In Shigella boydii serotype 18 (strain CDC 3083-94 / BS512), this protein is Cell division protein ZapA.